The sequence spans 258 residues: 4-hydroxy-2-oxovalerate aldolase (258 aa).

H48 (proton acceptor) is an active-site residue. A substrate-binding site is contributed by Q149. E151 provides a ligand contact to Mg(2+). Substrate contacts are provided by A176 and D177. D177 contributes to the Mg(2+) binding site.

Belongs to the HpcH/HpaI aldolase family.

It catalyses the reaction (S)-4-hydroxy-2-oxopentanoate = acetaldehyde + pyruvate. It participates in xenobiotic degradation; biphenyl degradation. In terms of biological role, catalyzes the reversible retro-aldol cleavage of 4-hydroxy-2-oxovalerate to pyruvate and acetaldehyde. This is 4-hydroxy-2-oxovalerate aldolase (bphF) from Rhodococcus jostii (strain RHA1).